A 660-amino-acid polypeptide reads, in one-letter code: Junctophilin-1 (660 aa).

The Cytoplasmic portion of the chain corresponds to 1–638 (MTGGRFDFDD…EKEANSGPNS (638 aa)). MORN repeat units follow at residues 14-36 (YCGG…KGQG), 38-59 (YSGS…SGNT), 60-82 (YQGY…KWMY), 106-128 (YEGT…DGGT), and 129-151 (YQGQ…PYGM). 3 positions are modified to phosphoserine: serine 157, serine 216, and serine 220. The interval 228 to 247 (SKSSISSKRSSVRSDAAMSR) is disordered. MORN repeat units follow at residues 281 to 303 (YMGE…NGMK) and 304 to 326 (YEGE…DGSK). Over residues 437-454 (NPEEKVLEKPPSPKESPH) the composition is skewed to basic and acidic residues. The segment at 437-631 (NPEEKVLEKP…NDTCPSLEKE (195 aa)) is disordered. Serine 452 is subject to Phosphoserine. Threonine 461 carries the phosphothreonine modification. 3 positions are modified to phosphoserine: serine 465, serine 469, and serine 475. A compositionally biased stretch (low complexity) spans 466–477 (PESSPKQSHSPQ). Composition is skewed to basic and acidic residues over residues 562-571 (PPEDREDDRG) and 598-612 (VAKE…KKSE). A helical; Anchor for type IV membrane protein membrane pass occupies residues 639-659 (IMIVLVMLLNIGLAILFVHFL).

This sequence belongs to the junctophilin family. Specifically expressed in skeletal muscle. Weakly expressed in embryos and neonates. Abundant in young adult muscles.

Its subcellular location is the cell membrane. The protein resides in the endoplasmic reticulum membrane. The protein localises to the sarcoplasmic reticulum membrane. In terms of biological role, junctophilins contribute to the formation of junctional membrane complexes (JMCs) which link the plasma membrane with the endoplasmic or sarcoplasmic reticulum in excitable cells. Provides a structural foundation for functional cross-talk between the cell surface and intracellular calcium release channels. JPH1 contributes to the construction of the skeletal muscle triad by linking the t-tubule (transverse-tubule) and SR (sarcoplasmic reticulum) membranes. The chain is Junctophilin-1 (Jph1) from Mus musculus (Mouse).